A 449-amino-acid polypeptide reads, in one-letter code: Phosphoglucosamine mutase (449 aa).

Ser101 (phosphoserine intermediate) is an active-site residue. Mg(2+)-binding residues include Ser101, Asp243, Asp245, and Asp247. Ser101 carries the post-translational modification Phosphoserine.

Belongs to the phosphohexose mutase family. Mg(2+) serves as cofactor. In terms of processing, activated by phosphorylation.

The catalysed reaction is alpha-D-glucosamine 1-phosphate = D-glucosamine 6-phosphate. Functionally, catalyzes the conversion of glucosamine-6-phosphate to glucosamine-1-phosphate. This chain is Phosphoglucosamine mutase, found in Syntrophobacter fumaroxidans (strain DSM 10017 / MPOB).